Consider the following 80-residue polypeptide: Small ribosomal subunit protein bS18 (80 aa).

This sequence belongs to the bacterial ribosomal protein bS18 family. Part of the 30S ribosomal subunit. Forms a tight heterodimer with protein bS6.

Binds as a heterodimer with protein bS6 to the central domain of the 16S rRNA, where it helps stabilize the platform of the 30S subunit. The chain is Small ribosomal subunit protein bS18 from Clostridium perfringens (strain ATCC 13124 / DSM 756 / JCM 1290 / NCIMB 6125 / NCTC 8237 / Type A).